Here is a 534-residue protein sequence, read N- to C-terminus: Alkaline serine exoprotease A (534 aa).

Residues 1–21 (MLKKLLSCCITSALCFHSSLA) form the signal peptide. Residues 22-141 (FSQPNEIADS…LSLDPIVSAD (120 aa)) constitute a propeptide that is removed on maturation. Positions 57-134 (RYIVVFQQPQ…YIEQDRILSL (78 aa)) constitute an Inhibitor I9 domain. Positions 148–419 (IWGLDRIDQR…KLLYSLTDAD (272 aa)) constitute a Peptidase S8 domain. Catalysis depends on charge relay system residues Asp-180, His-213, and Ser-363. Residues 423 to 442 (DCGGPDPTPDPEGKLTSGVP) are disordered.

This sequence belongs to the peptidase S8 family.

This is Alkaline serine exoprotease A (proA) from Vibrio alginolyticus.